A 222-amino-acid polypeptide reads, in one-letter code: Uridine diphosphate glucose pyrophosphatase NUDT14 (222 aa).

The Nudix hydrolase domain maps to 38–206; that stretch reads KTHDSVTILM…DVPKTLGVIF (169 aa). Positions 111-129 match the Nudix box motif; that stretch reads PGLSLEEVACKEAWEECGY.

The protein belongs to the Nudix hydrolase family. In terms of assembly, homodimer. Mg(2+) serves as cofactor.

The protein localises to the cytoplasm. The catalysed reaction is UDP-sugar + H2O = UMP + alpha-D-aldose 1-phosphate.. Functionally, hydrolyzes UDP-glucose to glucose 1-phosphate and UMP and ADP-ribose to ribose 5-phosphate and AMP. The physiological substrate is probably UDP-glucose. Poor activity on other substrates such as ADP-glucose, CDP-glucose, GDP-glucose and GDP-mannose. In Bos taurus (Bovine), this protein is Uridine diphosphate glucose pyrophosphatase NUDT14 (NUDT14).